A 1233-amino-acid chain; its full sequence is Structural maintenance of chromosomes protein 1A (1233 aa).

ATP is bound at residue 32–39; it reads GPNGSGKS. Coiled coils occupy residues 104-124 and 163-503; these read EYKI…LEKL and ELAQ…KAEI. Residues 284 to 293 show a composition bias toward basic and acidic residues; sequence IKEKDSELNQ. Disordered regions lie at residues 284–307 and 350–369; these read IKEK…NTSH and FEER…TLEE. Phosphoserine occurs at positions 358 and 360. The SMC hinge domain occupies 515 to 629; that stretch reads VYGRLIDLCQ…DNVEDARRIA (115 aa). An N6-acetyllysine mark is found at K648 and K713. Residues 660 to 935 are a coiled coil; sequence KAKARRWDEK…RHNLLQACKM (276 aa). Residues 946-969 form a disordered region; that stretch reads TMDDISQEEGGSQGEESVSGSQRT. The segment covering 953-967 has biased composition (low complexity); sequence EEGGSQGEESVSGSQ. S957, S962, S966, and S970 each carry phosphoserine. Residues 991–1068 are a coiled coil; it reads KDAQAEEEIK…FEQIKKERFD (78 aa). K1037 bears the N6-acetyllysine mark.

It belongs to the SMC family. SMC1 subfamily. In terms of assembly, forms a heterodimer with SMC3 in cohesin complexes. Cohesin complexes are composed of the SMC1 (SMC1A or meiosis-specific SMC1B) and SMC3 heterodimer attached via their SMC hinge domain, RAD21 which link them, and one STAG protein (STAG1, STAG2 or meiosis-specific STAG3), which interacts with RAD21. In germ cell cohesin complexes, SMC1A is mutually exclusive with SMC1B. Found in a complex with CDCA5, SMC3 and RAD21, PDS5A/SCC-112 and PDS5B/APRIN. Interacts with STAG3, NDC80, BRAC1, BRAT1 and RPGR. Found in a complex containing POLE and SMC3. The cohesin complex interacts with the cohesin loading complex subunits NIPBL/Scc2 (via HEAT repeats) and MAU2/Scc4. NIPBL directly contacts all members of the complex, RAD21, SMC1A/B, SMC3 and STAG1. Interacts with SYCP2. In terms of processing, phosphorylated upon ionizing radiation or DNA methylation. Phosphorylation of Ser-957 and Ser-966 activates it and is required for S-phase checkpoint activation. Ubiquitinated by the DCX(DCAF15) complex, leading to its degradation.

It localises to the nucleus. It is found in the chromosome. Its function is as follows. Involved in chromosome cohesion during cell cycle and in DNA repair. Central component of cohesin complex. The cohesin complex is required for the cohesion of sister chromatids after DNA replication. The cohesin complex apparently forms a large proteinaceous ring within which sister chromatids can be trapped. At anaphase, the complex is cleaved and dissociates from chromatin, allowing sister chromatids to segregate. The cohesin complex may also play a role in spindle pole assembly during mitosis. Involved in DNA repair via its interaction with BRCA1 and its related phosphorylation by ATM, or via its phosphorylation by ATR. Works as a downstream effector both in the ATM/NBS1 branch and in the ATR/MSH2 branch of S-phase checkpoint. The protein is Structural maintenance of chromosomes protein 1A (Smc1a) of Rattus norvegicus (Rat).